A 743-amino-acid chain; its full sequence is Putative metallophosphoesterase At3g03305 (743 aa).

The N-terminal stretch at M1–G40 is a signal peptide. The a divalent metal cation site is built by D66, H68, and D101. The next 5 helical transmembrane spans lie at I514–I534, M565–F585, V623–C643, L687–F704, and M716–I736.

It belongs to the metallophosphoesterase superfamily. A divalent metal cation is required as a cofactor.

The protein resides in the membrane. This is Putative metallophosphoesterase At3g03305 from Arabidopsis thaliana (Mouse-ear cress).